Consider the following 194-residue polypeptide: UPF0215 protein DR_A0167 (194 aa).

The protein belongs to the UPF0215 family.

This is UPF0215 protein DR_A0167 from Deinococcus radiodurans (strain ATCC 13939 / DSM 20539 / JCM 16871 / CCUG 27074 / LMG 4051 / NBRC 15346 / NCIMB 9279 / VKM B-1422 / R1).